Reading from the N-terminus, the 1469-residue chain is ABC transporter G family member 36 (1469 aa).

Residue methionine 1 is modified to N-acetylmethionine. 3 positions are modified to phosphoserine: serine 37, serine 38, and serine 40. Threonine 43 bears the Phosphothreonine mark. Serine 45 carries the phosphoserine modification. Residues 171–444 form the ABC transporter 1 domain; that stretch reads LGMIGIQFAK…FESFGFKCPE (274 aa). Residue 204–211 coordinates ATP; the sequence is GPPSSGKT. One can recognise an ABC transmembrane type-2 1 domain in the interval 522-735; sequence ELLKSCWDKE…AFNGLVVNEM (214 aa). 7 helical membrane passes run 540 to 560, 575 to 595, 621 to 641, 659 to 679, 685 to 705, 713 to 733, and 772 to 792; these read FFYVFKTVQIVIIAAITSTLF, LYIGALLFGMIINMFNGFAEM, LPTFLLGIPSSILESTAWMVV, FLLVFLIQQMAASLFRLIASV, IANTGGALTLLLVFLLGGFLL, WWGWAYWVSPLTYAFNGLVVN, and ISVGALLCFTALFNILFTLAL. The disordered stretch occupies residues 806–852; the sequence is PEEENEDADQGKDPMRRSLSTADGNRRGEVAMGRMSRDSAAEASGGA. A phosphoserine mark is found at serine 825, serine 841, and serine 844. Residues 829-845 are compositionally biased toward basic and acidic residues; the sequence is GNRRGEVAMGRMSRDSA. Positions 867 to 1119 constitute an ABC transporter 2 domain; that stretch reads MSFDDVKYFV…KVVEYFESFP (253 aa). 912–919 contacts ATP; it reads GVSGAGKT. The region spanning 1192 to 1406 is the ABC transmembrane type-2 2 domain; it reads GQFKSCLWKQ…TVYGLIVSQY (215 aa). Helical transmembrane passes span 1216-1236, 1239-1259, 1299-1319, 1326-1346, 1356-1376, 1384-1404, and 1441-1461; these read FIFTLATSLLIGTVFWQIGGN, NAGDLTMVIGALYAAIIFVGI, LPYVLIQTVYYSLIVYAMVGF, FFWFVFVSYFSFLYWTYYGMM, VASIFASAFYGIFNLFSGFFI, WWIWYYWICPVAWTVYGLIVS, and PVAAVLIAFTVFFAFIFAFCI.

Belongs to the ABC transporter superfamily. ABCG family. PDR (TC 3.A.1.205) subfamily. Interacts, in a Ca(2+)-dependent manner, with calmodulins CaM3, CaM7 and several CaM-like proteins (CML8, CML9, CML12/CAL4, CML37 and CML38), as well as with calcium regulated proteins CBL4/SOS3 and KIC. Post-translationally, phosphorylated upon perception of pathogen-associated molecular patterns (PAMPs); phosphorylations at Ser-40 and Ser-45, which likely regulate transport activity, are required for plant defense against pathogens (e.g. Blumeria graminis), but dispensable for recruitment to the host-pathogen interface and penetration sites. Phosphorylation at Ser-841 seems to be required for protein stability. As to expression, ubiquitous (at protein level). Higher levels in root hairs, stomata, epidermal cells, and hydathodes. Concentrated at the infection site of infected plants, including papillae and haustoria. Accumulates at the periphery of lateral root cap and root epidermal cells, especially in the outer lateral membrane domain facing the environment.

Its subcellular location is the cell membrane. It is found in the golgi apparatus. The protein resides in the trans-Golgi network membrane. The protein localises to the endoplasmic reticulum membrane. Together with ABCG37, regulates auxin homeostasis and responses by playing a dual role in coumarin (e.g. esculin) and in the auxin precursor indole 3-butyric acid (IBA) efflux transport, thus influencing cotyledons, roots and root hairs development. Mediates the transport (export into the apoplast) of distinct indole-type metabolites in distinct biological processes; a precursor of 4-O-beta-D-glucosyl-indol-3-yl formamide (4OGlcI3F), a pathogen-inducible tryptophan-derived compound (e.g. upon Blumeria graminis conidiospore inoculation), being a probable substrate in extracellular pathogen defense. Involved in the cellular detoxification of xenobiotics by promoting the excretion of some auxinic herbicides including 4-(2,4-dichlorophenoxy)butyric acid (2,4-DB) and other members of the phenoxyalkanoic acid family but not 2,4-dichlorophenoxyacetic acid (2,4-D). Mediates thymidine exudation in the rhizosphere. May be a transporter of lignin precursors during tracheary element differentiation. Key factor that controls the extent of cell death in the defense response. Necessary for both callose deposition and glucosinolate activation in response to pathogens. As a central component of nonhost resistance (NHR), required for limiting invasion by nonadapted pathogens including powdery mildews (e.g. Blumeria graminis and Erysiphe pisi), root-penetrating pathogenic fungi (e.g. Fusarium oxysporum), Phakopsora pachyrhizi and Colletotrichum gloeosporioides (anthracnose fungi), probably by sensing Ca(2+) via interactions with calmodulins (e.g. CaM7). Confers resistance to cadmium (Cd) and lead (Pb), probably as an efflux pump of Cd2+ or Cd conjugates, and possibly, of chemicals that mediate pathogen resistance. Promotes resistance to abiotic stresses (e.g. drought and salt stress) and favors general growth by preventing sodium accumulation in plants. Required for microbe-associated molecular patterns (MAMPs)- and salicylic acid (SA)-dependent hypersensitive cell death (HR), involving indole glucosinolate breakdown products (e.g. indole-3-acetonitrile), probably in a PEN2 myrosinase-dependent metabolic pathway, triggered by the recognition of effectors from incompatible pathogens including oomycetes and bacteria (e.g. AvrRpm1 and AvrRps4) and benzothiadiazole- (BTH), and leading to an induced protection against pathogens (e.g. Pseudomonas syringae pv. tomato DC3000, Golovinomyces orontii and Hyaloperonospora arabidopsidis). This Arabidopsis thaliana (Mouse-ear cress) protein is ABC transporter G family member 36.